The primary structure comprises 154 residues: Myoglobin (154 aa).

A Globin domain is found at 2–148 (VLSDGEWQLV…FRKDIAAKYK (147 aa)). Ser4 is modified (phosphoserine). Residue His65 participates in nitrite binding. Position 65 (His65) interacts with O2. Thr68 is modified (phosphothreonine). His94 is a binding site for heme b.

This sequence belongs to the globin family. In terms of assembly, monomeric.

Its subcellular location is the cytoplasm. The protein localises to the sarcoplasm. It catalyses the reaction Fe(III)-heme b-[protein] + nitric oxide + H2O = Fe(II)-heme b-[protein] + nitrite + 2 H(+). It carries out the reaction H2O2 + AH2 = A + 2 H2O. Its function is as follows. Monomeric heme protein which primary function is to store oxygen and facilitate its diffusion within muscle tissues. Reversibly binds oxygen through a pentacoordinated heme iron and enables its timely and efficient release as needed during periods of heightened demand. Depending on the oxidative conditions of tissues and cells, and in addition to its ability to bind oxygen, it also has a nitrite reductase activity whereby it regulates the production of bioactive nitric oxide. Under stress conditions, like hypoxia and anoxia, it also protects cells against reactive oxygen species thanks to its pseudoperoxidase activity. The protein is Myoglobin of Balaena mysticetus (Bowhead whale).